The following is a 237-amino-acid chain: Myelin protein zero-like protein 3 (237 aa).

The signal sequence occupies residues 1–32 (MQLARGTVGGRGCALFPLLSILVVQGARIVLS). One can recognise an Ig-like V-type domain in the interval 33–149 (LEISADAHVR…NIPLTELTVT (117 aa)). Residues 33–159 (LEISADAHVR…ERGFGTMLSS (127 aa)) are Extracellular-facing. A disulfide bridge connects residues cysteine 53 and cysteine 129. Residue asparagine 124 is glycosylated (N-linked (GlcNAc...) asparagine). The helical transmembrane segment at 160-180 (VALLSILVFVPSAVVVILLLV) threads the bilayer. The Cytoplasmic portion of the chain corresponds to 181–237 (RMGRKATGVQKRSRSGYKKSSIEVSDDTDQEDSNDCMTRLCVRCAECLDSDYEEEAY).

Belongs to the myelin P0 protein family. In terms of tissue distribution, present in all tissues tested, including the skin. Present in the keratinocytes and sebocytes in the skin (at protein level).

The protein localises to the membrane. Its function is as follows. Mediates homophilic cell-cell adhesion. The sequence is that of Myelin protein zero-like protein 3 (Mpzl3) from Mus musculus (Mouse).